The chain runs to 295 residues: MFRKFLFIPLLIVTSLVKAEIIEVDSLSKITQDFKVNYNKNYLPQDLLVVTVLDKFLFKPFGIPIGEYIDQRRYLELAPLFSQINKNSKIIYIAQLILTNDSYKKELQESDFPSFVNEISNSQIPIIAVNNGFTGNFNNIPKFEIWFADYLKKNFYIDFSKSFPNNNYIIFNNLDSFANTYPVFYKGILTSNNISVAQVILNFLIQINFIPKCFILISSNRELIRSMEFQLNNHSSNILFIGYHYNNKTISAHKDIVYYTKMINDLIPQINKLKRNNPPLKNNNAKSKNSYETHK.

An N-terminal signal peptide occupies residues 1–19 (MFRKFLFIPLLIVTSLVKA). Residues 274 to 295 (KRNNPPLKNNNAKSKNSYETHK) form a disordered region. A compositionally biased stretch (low complexity) spans 276–288 (NNPPLKNNNAKSK).

This is an uncharacterized protein from Rickettsia typhi (strain ATCC VR-144 / Wilmington).